The sequence spans 459 residues: Argininosuccinate lyase (459 aa).

This sequence belongs to the lyase 1 family. Argininosuccinate lyase subfamily.

The protein resides in the cytoplasm. It catalyses the reaction 2-(N(omega)-L-arginino)succinate = fumarate + L-arginine. The protein operates within amino-acid biosynthesis; L-arginine biosynthesis; L-arginine from L-ornithine and carbamoyl phosphate: step 3/3. The chain is Argininosuccinate lyase from Ruminiclostridium cellulolyticum (strain ATCC 35319 / DSM 5812 / JCM 6584 / H10) (Clostridium cellulolyticum).